A 202-amino-acid chain; its full sequence is LexA repressor (202 aa).

The H-T-H motif DNA-binding region spans 28-48 (RAEIAQRLGFRSPNAAEEHLK). Active-site for autocatalytic cleavage activity residues include Ser119 and Lys156.

The protein belongs to the peptidase S24 family. Homodimer.

It catalyses the reaction Hydrolysis of Ala-|-Gly bond in repressor LexA.. Its function is as follows. Represses a number of genes involved in the response to DNA damage (SOS response), including recA and lexA. Binds to the 16 bp palindromic sequence 5'-CTGTATATATATACAG-3'. In the presence of single-stranded DNA, RecA interacts with LexA causing an autocatalytic cleavage which disrupts the DNA-binding part of LexA, leading to derepression of the SOS regulon and eventually DNA repair. In Klebsiella pneumoniae (strain 342), this protein is LexA repressor.